A 201-amino-acid polypeptide reads, in one-letter code: Recombination protein RecR (201 aa).

Residues 57–72 (CADCRTFTEQEVCNIC) form a C4-type zinc finger. Residues 81–176 (GQICVVESPA…EASRIAHGVP (96 aa)) form the Toprim domain.

Belongs to the RecR family.

May play a role in DNA repair. It seems to be involved in an RecBC-independent recombinational process of DNA repair. It may act with RecF and RecO. This chain is Recombination protein RecR, found in Escherichia coli O6:K15:H31 (strain 536 / UPEC).